A 110-amino-acid polypeptide reads, in one-letter code: Parvalbumin alpha (110 aa).

EF-hand domains follow at residues 39 to 74 (KNAK…FAPE) and 78 to 110 (LSEK…VANS). 11 residues coordinate Ca(2+): Asp-52, Asp-54, Ser-56, Phe-58, Glu-60, Glu-63, Asp-91, Asp-93, Asp-95, Lys-97, and Glu-102.

Belongs to the parvalbumin family.

In terms of biological role, in muscle, parvalbumin is thought to be involved in relaxation after contraction. It binds two calcium ions. This chain is Parvalbumin alpha, found in Callorhinchus milii (Ghost shark).